The following is an 815-amino-acid chain: Protein pygopus (815 aa).

2 disordered regions span residues 1-107 and 147-711; these read MTHN…QVSA and GMGG…GPMG. The Nuclear localization signal signature appears at 39-45; it reads PKKRRKT. The segment covering 46–73 has biased composition (low complexity); that stretch reads SSAANSAAAVAAAAAAAAAANSMQQQQA. Over residues 74–86 the composition is skewed to pro residues; the sequence is PPTPQDLLPPPPM. The span at 188 to 199 shows a compositional bias: low complexity; sequence RGMSPMHPHQMG. Composition is skewed to gly residues over residues 230-248 and 257-269; these read PMGG…GMGG and GMGG…GGPN. Residues 307-316 show a composition bias toward pro residues; sequence LGPPSGPGPG. Low complexity-rich tracts occupy residues 323 to 341, 407 to 424, 444 to 478, and 495 to 545; these read GPQQ…NGQM, SNNN…NQNP, PSVS…VPTS, and GPSP…HQQH. Pro residues predominate over residues 569 to 580; sequence PQQPSHLGPPHP. Residues 602–621 are compositionally biased toward gly residues; that stretch reads GGPGMHGGPAGMPPHMGGGP. The span at 622 to 636 shows a compositional bias: low complexity; sequence NPHMMGGPHGNAGPH. Gly residues predominate over residues 640 to 656; sequence GHMGGVPGPGPGPGGMN. The segment covering 663 to 675 has biased composition (basic residues); the sequence is MSPHHGHPHHHHN. Gly residues predominate over residues 678-711; that stretch reads GGPGPNMFGGGGGGPMGPGGPMGNMGPMGGGPMG. A PHD-type zinc finger spans residues 747–805; that stretch reads IYPCGMCHKEVNDNDEAVFCESGCNFFFHRTCVGLTEAAFQMLNKEVFAEWCCDKCVSS.

Binds to BCL9 via the PHD-type zinc finger motif, and thereby becomes part of the nuclear ARM/PAN complex. As to expression, ubiquitous throughout embryogenesis and larval development.

Its subcellular location is the nucleus. In terms of biological role, involved in signal transduction through the Wnt pathway. This Drosophila melanogaster (Fruit fly) protein is Protein pygopus (pygo).